The primary structure comprises 200 residues: NADH-quinone oxidoreductase subunit C (200 aa).

This sequence belongs to the complex I 30 kDa subunit family. In terms of assembly, NDH-1 is composed of 14 different subunits. Subunits NuoB, C, D, E, F, and G constitute the peripheral sector of the complex.

It is found in the cell inner membrane. The enzyme catalyses a quinone + NADH + 5 H(+)(in) = a quinol + NAD(+) + 4 H(+)(out). Functionally, NDH-1 shuttles electrons from NADH, via FMN and iron-sulfur (Fe-S) centers, to quinones in the respiratory chain. The immediate electron acceptor for the enzyme in this species is believed to be ubiquinone. Couples the redox reaction to proton translocation (for every two electrons transferred, four hydrogen ions are translocated across the cytoplasmic membrane), and thus conserves the redox energy in a proton gradient. The sequence is that of NADH-quinone oxidoreductase subunit C from Ruegeria pomeroyi (strain ATCC 700808 / DSM 15171 / DSS-3) (Silicibacter pomeroyi).